Reading from the N-terminus, the 156-residue chain is MNMNELVFIDDFDNHVVIMSEVVMRLNSYRQTHYTSTESGGTLIGERRGQHLVITHISEPGQDDVRNRTGLERKGIHHQQKVNDLFQQSNGFIVYLGEWHTHPEDFPHPSFIDIKSWVMGIVATEPMIMLIVGRKDIWIGKKIKNDIKKLKKKMVS.

Residues 9–147 (IDDFDNHVVI…WIGKKIKNDI (139 aa)) enclose the MPN domain. The Proton donor/acceptor role is filled by glutamate 38. Zn(2+)-binding residues include histidine 100, histidine 102, and aspartate 113. A JAMM motif motif is present at residues 100-113 (HTHPEDFPHPSFID).

It belongs to the peptidase M67B family. Cap3 isopeptidase subfamily.

In terms of biological role, metalloprotease priming reversal component of a CBASS antivirus system. CBASS (cyclic oligonucleotide-based antiphage signaling system) provides immunity against bacteriophages. The CD-NTase protein (DncV) synthesizes cyclic nucleotides in response to infection; these serve as specific second messenger signals. The signals activate a diverse range of effectors, leading to bacterial cell death and thus abortive phage infection. A type II-A(GA) CBASS system. Functionally, reverses the primed state of DncV, the CD-NTase, cleaving it from cellular proteins. Cleaves a Sumo-DncV-DncV fusion protein precisely between the 2 DncV moieties. Protects E.coli against phage infection. When capV and dncV are introduced in E.coli MG1655 there is 1000-fold protection against phage P1; protection against other phage (T4, T5 and T6) requires the 2 subsequent genes. In another paper the capV-dncV-cap2-cap3 operon gives 10(4)-10(5)-fold protection against phages lambda, T2, T4 and T6, about 1000-fold protection against P1 and 10-fold protection against T5. This is CD-NTase/cGAS isopeptidase from Escherichia coli (strain TW11681).